Here is a 76-residue protein sequence, read N- to C-terminus: Sec-independent protein translocase protein TatA (76 aa).

Residues 1–21 (MGSFSIWHWLVVLAIVVLVFG) form a helical membrane-spanning segment. The disordered stretch occupies residues 41–76 (EGMKGAEEESTPPPPAQQVTGHSIKSEIEEKDQTKV). A compositionally biased stretch (basic and acidic residues) spans 64-76 (IKSEIEEKDQTKV).

It belongs to the TatA/E family. The Tat system comprises two distinct complexes: a TatABC complex, containing multiple copies of TatA, TatB and TatC subunits, and a separate TatA complex, containing only TatA subunits. Substrates initially bind to the TatABC complex, which probably triggers association of the separate TatA complex to form the active translocon.

The protein resides in the cell inner membrane. Functionally, part of the twin-arginine translocation (Tat) system that transports large folded proteins containing a characteristic twin-arginine motif in their signal peptide across membranes. TatA could form the protein-conducting channel of the Tat system. The sequence is that of Sec-independent protein translocase protein TatA from Nitrosomonas europaea (strain ATCC 19718 / CIP 103999 / KCTC 2705 / NBRC 14298).